A 363-amino-acid polypeptide reads, in one-letter code: Spermidine/putrescine import ATP-binding protein PotA 2 (363 aa).

Residues 6–236 (LEIRNVTRRF…PRSRFVADFI (231 aa)) form the ABC transporter domain. 38 to 45 (GPSGCGKT) provides a ligand contact to ATP.

The protein belongs to the ABC transporter superfamily. Spermidine/putrescine importer (TC 3.A.1.11.1) family. The complex is composed of two ATP-binding proteins (PotA), two transmembrane proteins (PotB and PotC) and a solute-binding protein (PotD).

The protein resides in the cell inner membrane. The enzyme catalyses ATP + H2O + polyamine-[polyamine-binding protein]Side 1 = ADP + phosphate + polyamineSide 2 + [polyamine-binding protein]Side 1.. Functionally, part of the ABC transporter complex PotABCD involved in spermidine/putrescine import. Responsible for energy coupling to the transport system. This is Spermidine/putrescine import ATP-binding protein PotA 2 from Pseudomonas aeruginosa (strain ATCC 15692 / DSM 22644 / CIP 104116 / JCM 14847 / LMG 12228 / 1C / PRS 101 / PAO1).